A 104-amino-acid chain; its full sequence is Large ribosomal subunit protein uL24 (104 aa).

The protein belongs to the universal ribosomal protein uL24 family. In terms of assembly, part of the 50S ribosomal subunit.

One of two assembly initiator proteins, it binds directly to the 5'-end of the 23S rRNA, where it nucleates assembly of the 50S subunit. In terms of biological role, one of the proteins that surrounds the polypeptide exit tunnel on the outside of the subunit. The sequence is that of Large ribosomal subunit protein uL24 from Caulobacter vibrioides (strain ATCC 19089 / CIP 103742 / CB 15) (Caulobacter crescentus).